Here is a 371-residue protein sequence, read N- to C-terminus: Carbamoyl phosphate synthase small chain (371 aa).

The tract at residues methionine 1 to valine 186 is CPSase. Serine 52, glycine 233, and glycine 235 together coordinate L-glutamine. One can recognise a Glutamine amidotransferase type-1 domain in the interval valine 185–alanine 371. Catalysis depends on cysteine 261, which acts as the Nucleophile. L-glutamine-binding residues include leucine 262, glutamine 265, asparagine 303, glycine 305, and tyrosine 306. Active-site residues include histidine 346 and glutamate 348.

This sequence belongs to the CarA family. As to quaternary structure, composed of two chains; the small (or glutamine) chain promotes the hydrolysis of glutamine to ammonia, which is used by the large (or ammonia) chain to synthesize carbamoyl phosphate. Tetramer of heterodimers (alpha,beta)4.

The enzyme catalyses hydrogencarbonate + L-glutamine + 2 ATP + H2O = carbamoyl phosphate + L-glutamate + 2 ADP + phosphate + 2 H(+). It carries out the reaction L-glutamine + H2O = L-glutamate + NH4(+). The protein operates within amino-acid biosynthesis; L-arginine biosynthesis; carbamoyl phosphate from bicarbonate: step 1/1. It participates in pyrimidine metabolism; UMP biosynthesis via de novo pathway; (S)-dihydroorotate from bicarbonate: step 1/3. In terms of biological role, small subunit of the glutamine-dependent carbamoyl phosphate synthetase (CPSase). CPSase catalyzes the formation of carbamoyl phosphate from the ammonia moiety of glutamine, carbonate, and phosphate donated by ATP, constituting the first step of 2 biosynthetic pathways, one leading to arginine and/or urea and the other to pyrimidine nucleotides. The small subunit (glutamine amidotransferase) binds and cleaves glutamine to supply the large subunit with the substrate ammonia. In Sulfolobus acidocaldarius (strain ATCC 33909 / DSM 639 / JCM 8929 / NBRC 15157 / NCIMB 11770), this protein is Carbamoyl phosphate synthase small chain.